Here is a 408-residue protein sequence, read N- to C-terminus: GPI transamidase component GAB1 homolog (408 aa).

Helical transmembrane passes span 9 to 29 (LLGLLSISFFLQWYLANTWIA), 66 to 86 (VFYQSPLLLILNYCCELLGGI), 88 to 108 (VTRFVYTSISTMGGLFVYLIA), 125 to 145 (PLWISVIYLLNPLTFLPGIAC), 149 to 169 (MILNFTTLMTIYFASCGSYAI), 207 to 227 (IFVVFLFYLAGLIITSGFFLN), 266 to 286 (FFLFVFAILPLMFVLPVSIRL), 303 to 323 (LFKAYPSICDLSIFLSLLPIF), 339 to 359 (AIVFALVLGSAFYHSWITLGC), and 370 to 390 (LILALGLSLKIMDFLKALLLV). A may be involved in recognition of long-chain fatty acids in GPI region spans residues 247 to 267 (PNLGLWWYFFTEMFNEFRTFF).

Belongs to the PIGU family. As to quaternary structure, forms a complex with PIG-S homolog, PIG-T homolog and GPI8.

It localises to the endoplasmic reticulum membrane. It participates in glycolipid biosynthesis; glycosylphosphatidylinositol-anchor biosynthesis. Its function is as follows. Component of the GPI transamidase complex. May be involved in the recognition of either the GPI attachment signal or the lipid portion of GPI. The polypeptide is GPI transamidase component GAB1 homolog (Schizosaccharomyces pombe (strain 972 / ATCC 24843) (Fission yeast)).